A 332-amino-acid polypeptide reads, in one-letter code: Geranylgeranyl diphosphate synthase (332 aa).

Residues Lys45, Arg48, and His77 each coordinate isopentenyl diphosphate. Mg(2+) is bound by residues Asp84 and Asp88. Arg93 provides a ligand contact to an all-trans-polyprenyl diphosphate. Arg94 contributes to the isopentenyl diphosphate binding site. An all-trans-polyprenyl diphosphate is bound by residues Lys177, Thr178, Gln215, Lys232, and Lys242.

It belongs to the FPP/GGPP synthase family. Mg(2+) is required as a cofactor.

The catalysed reaction is isopentenyl diphosphate + (2E,6E)-farnesyl diphosphate = (2E,6E,10E)-geranylgeranyl diphosphate + diphosphate. It participates in isoprenoid biosynthesis; geranylgeranyl diphosphate biosynthesis; geranylgeranyl diphosphate from farnesyl diphosphate and isopentenyl diphosphate: step 1/1. Its function is as follows. Catalyzes the condensation of isopentenyl pyrophosphate with the allylic pyrophosphates to yield geranylgeranyl diphosphate (GGPP) which is a precursor of the ether-linked lipids. This Saccharolobus solfataricus (strain ATCC 35092 / DSM 1617 / JCM 11322 / P2) (Sulfolobus solfataricus) protein is Geranylgeranyl diphosphate synthase (gds).